A 423-amino-acid polypeptide reads, in one-letter code: UDP-N-acetylglucosamine 1-carboxyvinyltransferase 2 (423 aa).

Residue 23–24 (KN) coordinates phosphoenolpyruvate. UDP-N-acetyl-alpha-D-glucosamine is bound at residue arginine 96. Cysteine 120 serves as the catalytic Proton donor. 2-(S-cysteinyl)pyruvic acid O-phosphothioketal is present on cysteine 120. UDP-N-acetyl-alpha-D-glucosamine is bound by residues 125–129 (RPIDL), aspartate 309, and valine 331.

It belongs to the EPSP synthase family. MurA subfamily.

It is found in the cytoplasm. The catalysed reaction is phosphoenolpyruvate + UDP-N-acetyl-alpha-D-glucosamine = UDP-N-acetyl-3-O-(1-carboxyvinyl)-alpha-D-glucosamine + phosphate. The protein operates within cell wall biogenesis; peptidoglycan biosynthesis. Its function is as follows. Cell wall formation. Adds enolpyruvyl to UDP-N-acetylglucosamine. The polypeptide is UDP-N-acetylglucosamine 1-carboxyvinyltransferase 2 (Streptococcus agalactiae serotype III (strain NEM316)).